The sequence spans 400 residues: Argininosuccinate synthase (400 aa).

ATP is bound by residues 6 to 14 (AYSGGLDTS) and Ala33. Residues Tyr84 and Ser89 each contribute to the L-citrulline site. Residue Gly114 participates in ATP binding. L-aspartate is bound by residues Thr116, Asn120, and Asp121. Asn120 lines the L-citrulline pocket. Arg124, Ser173, Ser182, Glu258, and Tyr270 together coordinate L-citrulline.

This sequence belongs to the argininosuccinate synthase family. Type 1 subfamily. As to quaternary structure, homotetramer.

Its subcellular location is the cytoplasm. It catalyses the reaction L-citrulline + L-aspartate + ATP = 2-(N(omega)-L-arginino)succinate + AMP + diphosphate + H(+). It functions in the pathway amino-acid biosynthesis; L-arginine biosynthesis; L-arginine from L-ornithine and carbamoyl phosphate: step 2/3. This chain is Argininosuccinate synthase, found in Thermus thermophilus (strain ATCC BAA-163 / DSM 7039 / HB27).